A 215-amino-acid polypeptide reads, in one-letter code: Ribonuclease T (215 aa).

One can recognise an Exonuclease domain in the interval 21 to 195 (VVIDVETAGF…YDSKKTAELF (175 aa)). Mg(2+) is bound by residues aspartate 24, glutamate 26, histidine 182, and aspartate 187. The active-site Proton donor/acceptor is the histidine 182.

It belongs to the RNase T family. As to quaternary structure, homodimer. It depends on Mg(2+) as a cofactor.

Its function is as follows. Trims short 3' overhangs of a variety of RNA species, leaving a one or two nucleotide 3' overhang. Responsible for the end-turnover of tRNA: specifically removes the terminal AMP residue from uncharged tRNA (tRNA-C-C-A). Also appears to be involved in tRNA biosynthesis. In Wigglesworthia glossinidia brevipalpis, this protein is Ribonuclease T.